We begin with the raw amino-acid sequence, 513 residues long: Gluconokinase (513 aa).

ATP-binding positions include lysine 16, threonine 261, glycine 300, and 412 to 416 (GFARS).

Belongs to the FGGY kinase family.

It carries out the reaction D-gluconate + ATP = 6-phospho-D-gluconate + ADP + H(+). It participates in carbohydrate acid metabolism; D-gluconate degradation. Its activity is regulated as follows. Catabolite repression by gluconate. The polypeptide is Gluconokinase (gntK) (Bacillus licheniformis).